We begin with the raw amino-acid sequence, 73 residues long: Homeodomain-only protein (73 aa).

The segment at residues 3–62 (TETASGPTEDQVEILEYNFNKVNKHPDPTTLCLIAAEAGLSEEETQKWFKQRLAQWRRSE) is a DNA-binding region (homeobox; degenerate).

In terms of assembly, interacts with serum response factor (SRF). Component of a large complex containing histone deacetylases such as HDAC2. Interacts with the acetylated forms of HSPA1A and HSPA1B. Interacts with HSPA8.

The protein resides in the nucleus. Its subcellular location is the cytoplasm. Atypical homeodomain protein which does not bind DNA and is required to modulate cardiac growth and development. Acts via its interaction with SRF, thereby modulating the expression of SRF-dependent cardiac-specific genes and cardiac development. Prevents SRF-dependent transcription either by inhibiting SRF binding to DNA or by recruiting histone deacetylase (HDAC) proteins that prevent transcription by SRF. Overexpression causes cardiac hypertrophy. Acts as a co-chaperone for HSPA1A and HSPA1B chaperone proteins and assists in chaperone-mediated protein refolding. The sequence is that of Homeodomain-only protein (HOPX) from Bos taurus (Bovine).